Consider the following 779-residue polypeptide: Anion/proton exchange transporter GEF1 (779 aa).

Over 1–75 the chain is Cytoplasmic; it reads MPTTYVPINQ…REVIWDRAKT (75 aa). A helical membrane pass occupies residues 76 to 96; the sequence is FITLSSTAIVIGCIAGFLQVF. Residues 97–154 are Lumenal-facing; it reads TETLVNWKTGHCQRNWLLNKSFCCNGVVNEVTSTSNLLLKRQEFECEAQGLWIAWKGH. Residues 155–175 form a helical membrane-spanning segment; sequence VSPFIIFMLLSVLFALISTLL. Topologically, residues 176–177 are cytoplasmic; that stretch reads VK. Residues 178-198 form a helical membrane-spanning segment; the sequence is YVAPMATGSGISEIKVWVSGF. Residues 199-203 are Lumenal-facing; sequence EYNKE. A helical transmembrane segment spans residues 204–224; it reads FLGFLTLVIKSVALPLAISSG. Over 225–264 the chain is Cytoplasmic; that stretch reads LSVGKEGPSVHYATCCGYLLTKWLLRDTLTYSSQYEYITA. Residues 265–285 form a helical membrane-spanning segment; that stretch reads ASGAGVAVAFGAPIGGVLFGL. Over 286-296 the chain is Lumenal; sequence EEIASANRFNS. A helical transmembrane segment spans residues 297–319; it reads STLWKSYYVALVAITTLKYIDPF. Residues 320-336 are Cytoplasmic-facing; the sequence is RNGRVILFNVTYDRDWK. Residues 337–357 form a helical membrane-spanning segment; it reads VQEIPIFIALGIFGGLYGKYI. At 358-369 the chain is on the lumenal side; sequence SKWNINFIHFRK. The helical transmembrane segment at 370 to 390 threads the bilayer; sequence MYLSSWPVQEVLFLATLTALI. The Cytoplasmic segment spans residues 391-436; sequence SYFNEFLKLDMTESMGILFHECVKNDNTSTFSHRLCQLDENTHAFE. Residues 437 to 457 form a helical membrane-spanning segment; sequence FLKIFTSLCFATVIRALLVVV. Residues 458-465 lie on the Lumenal side of the membrane; that stretch reads SYGARVPA. Residues 466-486 traverse the membrane as a helical segment; the sequence is GIFVPSMAVGATFGRAVSLLV. Residues 487–500 are Cytoplasmic-facing; sequence ERFISGPSVITPGA. The chain crosses the membrane as a helical span at residues 501–523; it reads YAFLGAAATLSGITNLTLTVVVI. Residues 524 to 529 lie on the Lumenal side of the membrane; it reads MFELTG. Residues 530 to 552 form a helical membrane-spanning segment; it reads AFMYIIPLMIVVAITRIILSTSG. Topologically, residues 553-779 are cytoplasmic; that stretch reads ISGGIADQMI…FTTNRNGNVI (227 aa). CBS domains are found at residues 591–659 and 688–744; these read MSSK…VNST and MNES…YREV.

The protein belongs to the chloride channel (TC 2.A.49) family. As to quaternary structure, homodimer. Interacts with GET3. Post-translationally, proteolytically processed in the secretory pathway by protease KEX2 within the first extracellular loop. However, both the N- and C-terminal products of the cleavage reaction are required for assembly of a functional channel.

It is found in the golgi apparatus membrane. The protein localises to the endosome membrane. Its subcellular location is the prevacuolar compartment membrane. Its function is as follows. Anion/proton exchange transporter involved in iron and copper cation homeostasis. Involved in intracellular iron metabolism during growth on fermentable and non fermentable carbon sources. Required for proper copper-loading and maturation of multicopper oxidase FET3. Important for adjusting intracellular compartment pH to more alkaline pH under iron limitation. May also transport chloride ions through the plasma membrane. This chain is Anion/proton exchange transporter GEF1 (GEF1), found in Saccharomyces cerevisiae (strain ATCC 204508 / S288c) (Baker's yeast).